The sequence spans 283 residues: Thymidylate synthase (283 aa).

A dUMP-binding site is contributed by Arg22. The Nucleophile role is filled by Cys160. DUMP-binding positions include 180-183 (RSCD), Asn191, and 221-223 (HIY). Residue Asp183 participates in (6R)-5,10-methylene-5,6,7,8-tetrahydrofolate binding. Ser282 is a (6R)-5,10-methylene-5,6,7,8-tetrahydrofolate binding site.

It belongs to the thymidylate synthase family. Bacterial-type ThyA subfamily. As to quaternary structure, homodimer.

The protein localises to the cytoplasm. The enzyme catalyses dUMP + (6R)-5,10-methylene-5,6,7,8-tetrahydrofolate = 7,8-dihydrofolate + dTMP. The protein operates within pyrimidine metabolism; dTTP biosynthesis. In terms of biological role, catalyzes the reductive methylation of 2'-deoxyuridine-5'-monophosphate (dUMP) to 2'-deoxythymidine-5'-monophosphate (dTMP) while utilizing 5,10-methylenetetrahydrofolate (mTHF) as the methyl donor and reductant in the reaction, yielding dihydrofolate (DHF) as a by-product. This enzymatic reaction provides an intracellular de novo source of dTMP, an essential precursor for DNA biosynthesis. The protein is Thymidylate synthase of Vibrio parahaemolyticus serotype O3:K6 (strain RIMD 2210633).